The chain runs to 548 residues: Aromatic ammonia-lyase (548 aa).

The active-site Proton donor/acceptor is the Y55. Residues 144-146 (ASG) constitute a cross-link (5-imidazolinone (Ala-Gly)). S145 carries the 2,3-didehydroalanine (Ser) modification. N200, Q288, R294, N324, K396, E425, and N428 together coordinate (E)-cinnamate.

It belongs to the PAL/histidase family. Homotetramer. Contains an active site 4-methylidene-imidazol-5-one (MIO), which is formed autocatalytically by cyclization and dehydration of residues Ala-Ser-Gly.

The catalysed reaction is L-phenylalanine = (E)-cinnamate + NH4(+). It carries out the reaction L-tyrosine = (E)-4-coumarate + NH4(+). The enzyme catalyses 3,4-dimethoxy-L-phenylalanine = 3,4-dimethoxy-(E)-cinnamate + NH4(+). Its pathway is phenylpropanoid metabolism; trans-cinnamate biosynthesis; trans-cinnamate from L-phenylalanine: step 1/1. Its function is as follows. Aromatic ammonia-lyase (AAL) that shows reduced activity to catalyze the non-oxidative ammonia elimination from the canonical AAL substrates L-Phe and L-Tyr, contrasted by its pronounced efficiency towards substrates with electron-donor aromatic substituents such as 3,4-dimethoxy-L-phenylalanine. Is also able to catalyze the reverse reaction in vitro, i.e. the ammonia addition reaction to cinnamate derivatives, producing enantiopure phenylalanine derivatives. Shows no activity with L-His. The polypeptide is Aromatic ammonia-lyase (Loktanella atrilutea).